A 301-amino-acid polypeptide reads, in one-letter code: Quinolinate synthase (301 aa).

2 residues coordinate iminosuccinate: H21 and S38. A [4Fe-4S] cluster-binding site is contributed by C83. Residues 109-111 (YIN) and S126 contribute to the iminosuccinate site. Residue C169 coordinates [4Fe-4S] cluster. Iminosuccinate is bound by residues 195–197 (HPE) and T212. [4Fe-4S] cluster is bound at residue C257.

It belongs to the quinolinate synthase family. Type 2 subfamily. Requires [4Fe-4S] cluster as cofactor.

It is found in the cytoplasm. The catalysed reaction is iminosuccinate + dihydroxyacetone phosphate = quinolinate + phosphate + 2 H2O + H(+). The protein operates within cofactor biosynthesis; NAD(+) biosynthesis; quinolinate from iminoaspartate: step 1/1. In terms of biological role, catalyzes the condensation of iminoaspartate with dihydroxyacetone phosphate to form quinolinate. The sequence is that of Quinolinate synthase from Clostridium perfringens (strain 13 / Type A).